The following is a 1254-amino-acid chain: DNA-directed RNA polymerase subunit beta (1254 aa).

The protein belongs to the RNA polymerase beta chain family. The RNAP catalytic core consists of 2 alpha, 1 beta, 1 beta' and 1 omega subunit. When a sigma factor is associated with the core the holoenzyme is formed, which can initiate transcription.

The enzyme catalyses RNA(n) + a ribonucleoside 5'-triphosphate = RNA(n+1) + diphosphate. Its function is as follows. DNA-dependent RNA polymerase catalyzes the transcription of DNA into RNA using the four ribonucleoside triphosphates as substrates. This is DNA-directed RNA polymerase subunit beta from Protochlamydia amoebophila (strain UWE25).